The primary structure comprises 215 residues: Probable transaldolase (215 aa).

Catalysis depends on lysine 83, which acts as the Schiff-base intermediate with substrate.

Belongs to the transaldolase family. Type 3B subfamily.

It localises to the cytoplasm. The catalysed reaction is D-sedoheptulose 7-phosphate + D-glyceraldehyde 3-phosphate = D-erythrose 4-phosphate + beta-D-fructose 6-phosphate. It participates in carbohydrate degradation; pentose phosphate pathway; D-glyceraldehyde 3-phosphate and beta-D-fructose 6-phosphate from D-ribose 5-phosphate and D-xylulose 5-phosphate (non-oxidative stage): step 2/3. Its function is as follows. Transaldolase is important for the balance of metabolites in the pentose-phosphate pathway. The polypeptide is Probable transaldolase (Pelotomaculum thermopropionicum (strain DSM 13744 / JCM 10971 / SI)).